Consider the following 387-residue polypeptide: Alanine racemase (387 aa).

Catalysis depends on Lys-48, which acts as the Proton acceptor; specific for D-alanine. The residue at position 48 (Lys-48) is an N6-(pyridoxal phosphate)lysine. Residue Arg-146 coordinates substrate. The active-site Proton acceptor; specific for L-alanine is Tyr-267. Met-315 provides a ligand contact to substrate.

Belongs to the alanine racemase family. It depends on pyridoxal 5'-phosphate as a cofactor.

It carries out the reaction L-alanine = D-alanine. It participates in amino-acid biosynthesis; D-alanine biosynthesis; D-alanine from L-alanine: step 1/1. In terms of biological role, catalyzes the interconversion of L-alanine and D-alanine. May also act on other amino acids. The sequence is that of Alanine racemase (alr) from Methylacidiphilum infernorum (isolate V4) (Methylokorus infernorum (strain V4)).